The chain runs to 599 residues: Sulfite reductase [NADPH] flavoprotein alpha-component (599 aa).

In terms of domain architecture, Flavodoxin-like spans 64 to 202 (ITIISASQTG…AASEWRARVV (139 aa)). FMN-binding positions include 70-75 (SQTGNA), 117-120 (STQG), and 153-162 (LGDSSYEFFC). The 215-residue stretch at 234–448 (DAPLAASLSV…IEHNDNFRLP (215 aa)) folds into the FAD-binding FR-type domain. FAD is bound by residues Thr-322, Ala-356, 386–389 (RLYS), 404–406 (TVG), Tyr-410, and 419–422 (GGAS). Residues 519–520 (SR), 525–529 (KIYVQ), and Asp-561 contribute to the NADP(+) site. Residue Tyr-599 participates in FAD binding.

It belongs to the NADPH-dependent sulphite reductase flavoprotein subunit CysJ family. In the N-terminal section; belongs to the flavodoxin family. The protein in the C-terminal section; belongs to the flavoprotein pyridine nucleotide cytochrome reductase family. Alpha(8)-beta(8). The alpha component is a flavoprotein, the beta component is a hemoprotein. It depends on FAD as a cofactor. Requires FMN as cofactor.

The catalysed reaction is hydrogen sulfide + 3 NADP(+) + 3 H2O = sulfite + 3 NADPH + 4 H(+). Its pathway is sulfur metabolism; hydrogen sulfide biosynthesis; hydrogen sulfide from sulfite (NADPH route): step 1/1. Its function is as follows. Component of the sulfite reductase complex that catalyzes the 6-electron reduction of sulfite to sulfide. This is one of several activities required for the biosynthesis of L-cysteine from sulfate. The flavoprotein component catalyzes the electron flow from NADPH -&gt; FAD -&gt; FMN to the hemoprotein component. In Escherichia coli O6:H1 (strain CFT073 / ATCC 700928 / UPEC), this protein is Sulfite reductase [NADPH] flavoprotein alpha-component.